Consider the following 365-residue polypeptide: Hematopoietic SH2 domain-containing protein homolog (365 aa).

The SH2 domain maps to 34–125 (WFHGIISRKA…PYNELLTVAC (92 aa)). Disordered stretches follow at residues 199 to 278 (QSTD…QQKP) and 335 to 365 (AEHPISDGIPKSSDRNLPVEYRHPPPFAPGY). A compositionally biased stretch (polar residues) spans 257–277 (QQITPNTPNEGRTQQKNQQQK).

Its function is as follows. May be an adapter protein involved in tyrosine kinase signaling. The sequence is that of Hematopoietic SH2 domain-containing protein homolog (hsh2d) from Danio rerio (Zebrafish).